Here is a 170-residue protein sequence, read N- to C-terminus: Lipoprotein signal peptidase (170 aa).

A run of 3 helical transmembrane segments spans residues 9–29 (FNIF…KYLV), 72–92 (IFFL…SLKE), and 94–114 (NCIA…NVID). Active-site residues include Asp-124 and Asp-146. Residues 143–163 (NFADSYVVIGMILFLVYDFFI) form a helical membrane-spanning segment.

This sequence belongs to the peptidase A8 family.

The protein localises to the cell inner membrane. The enzyme catalyses Release of signal peptides from bacterial membrane prolipoproteins. Hydrolyzes -Xaa-Yaa-Zaa-|-(S,diacylglyceryl)Cys-, in which Xaa is hydrophobic (preferably Leu), and Yaa (Ala or Ser) and Zaa (Gly or Ala) have small, neutral side chains.. Its pathway is protein modification; lipoprotein biosynthesis (signal peptide cleavage). Functionally, this protein specifically catalyzes the removal of signal peptides from prolipoproteins. This Borreliella burgdorferi (strain ATCC 35210 / DSM 4680 / CIP 102532 / B31) (Borrelia burgdorferi) protein is Lipoprotein signal peptidase.